Consider the following 114-residue polypeptide: T cell receptor beta variable 6-4 (114 aa).

The first 21 residues, 1–21 (MSIRLLCCVAFSLLWAGPVTA), serve as a signal peptide directing secretion. Positions 22 to 114 (GITQAPTSQI…TSVYFCASSD (93 aa)) constitute an Ig-like domain. An intrachain disulfide couples C42 to C110.

As to quaternary structure, alpha-beta TR is a heterodimer composed of an alpha and beta chain; disulfide-linked. The alpha-beta TR is associated with the transmembrane signaling CD3 coreceptor proteins to form the TR-CD3 (TcR or TCR). The assembly of alpha-beta TR heterodimers with CD3 occurs in the endoplasmic reticulum where a single alpha-beta TR heterodimer associates with one CD3D-CD3E heterodimer, one CD3G-CD3E heterodimer and one CD247 homodimer forming a stable octameric structure. CD3D-CD3E and CD3G-CD3E heterodimers preferentially associate with TR alpha and TR beta chains, respectively. The association of the CD247 homodimer is the last step of TcR assembly in the endoplasmic reticulum and is required for transport to the cell surface.

It is found in the cell membrane. In terms of biological role, v region of the variable domain of T cell receptor (TR) beta chain that participates in the antigen recognition. Alpha-beta T cell receptors are antigen specific receptors which are essential to the immune response and are present on the cell surface of T lymphocytes. Recognize peptide-major histocompatibility (MH) (pMH) complexes that are displayed by antigen presenting cells (APC), a prerequisite for efficient T cell adaptive immunity against pathogens. Binding of alpha-beta TR to pMH complex initiates TR-CD3 clustering on the cell surface and intracellular activation of LCK that phosphorylates the ITAM motifs of CD3G, CD3D, CD3E and CD247 enabling the recruitment of ZAP70. In turn ZAP70 phosphorylates LAT, which recruits numerous signaling molecules to form the LAT signalosome. The LAT signalosome propagates signal branching to three major signaling pathways, the calcium, the mitogen-activated protein kinase (MAPK) kinase and the nuclear factor NF-kappa-B (NF-kB) pathways, leading to the mobilization of transcription factors that are critical for gene expression and essential for T cell growth and differentiation. The T cell repertoire is generated in the thymus, by V-(D)-J rearrangement. This repertoire is then shaped by intrathymic selection events to generate a peripheral T cell pool of self-MH restricted, non-autoaggressive T cells. Post-thymic interaction of alpha-beta TR with the pMH complexes shapes TR structural and functional avidity. The protein is T cell receptor beta variable 6-4 of Homo sapiens (Human).